The following is a 136-amino-acid chain: Translation initiation factor 5A (136 aa).

Hypusine is present on Lys37.

This sequence belongs to the eIF-5A family.

It localises to the cytoplasm. In terms of biological role, functions by promoting the formation of the first peptide bond. The sequence is that of Translation initiation factor 5A from Thermococcus kodakarensis (strain ATCC BAA-918 / JCM 12380 / KOD1) (Pyrococcus kodakaraensis (strain KOD1)).